Consider the following 135-residue polypeptide: uncharacterized protein (135 aa).

Residues 4–129 (SIVHIALVVN…YGNLWDLLQL (126 aa)) form the VOC domain.

This sequence to B.subtilis YwkD.

This is an uncharacterized protein from Shewanella frigidimarina (strain NCIMB 400).